A 783-amino-acid chain; its full sequence is Protein SCARECROW (783 aa).

The interval 298 to 387 (QPQSQDAITH…QSPPASENTA (90 aa)) is disordered. Low complexity-rich tracts occupy residues 342–353 (PSSLPFVPVPSS) and 372–384 (ESQS…PASE). A coiled-coil region spans residues 387–418 (AAAALIRTESIMRREKEELEQQKKDEEGLHLL). The GRAS domain maps to 408 to 777 (QKKDEEGLHL…LCLLTASAWR (370 aa)). The tract at residues 415–478 (LHLLTLLLQC…LVNSCLGIYA (64 aa)) is leucine repeat I (LRI). Positions 422–426 (LQCAE) match the LxCxE motif motif. Residues 497-562 (FQVFNGISPF…GGPPLVRLTG (66 aa)) form a VHIID region. Positions 528–532 (VHIID) match the VHIID motif. Residues 572 to 604 (ATGKRLSDFAQKLGLPFEFFPVADKVGNLDPQR) form a leucine repeat II (LRII) region. The interval 613–700 (VAVHWLQHSL…QQLLSREIRN (88 aa)) is PFYRE. The tract at residues 703 to 777 (AVGGPSRSGE…LCLLTASAWR (75 aa)) is SAW.

It belongs to the GRAS family.

The protein resides in the nucleus. Functionally, putative transcription factor involved in asymmetric cell division. Required for differentiation of endodermis and graviresponses. In Ipomoea nil (Japanese morning glory), this protein is Protein SCARECROW (SCR).